Here is a 113-residue protein sequence, read N- to C-terminus: Urocortin-2 (113 aa).

Residues 1–23 form the signal peptide; the sequence is MMTRWALVVFVVLMLDRILFVPG. The propeptide occupies 24-71; the sequence is TPIPTFQLLPQNSLETTPSSVTSESSSGTTTGPSASWSNSKASPYLDT. Over residues 37–61 the composition is skewed to low complexity; that stretch reads LETTPSSVTSESSSGTTTGPSASWS. Residues 37–64 form a disordered region; the sequence is LETTPSSVTSESSSGTTTGPSASWSNSK. Residue Val110 is modified to Valine amide; partial.

This sequence belongs to the sauvagine/corticotropin-releasing factor/urotensin I family. Binds with high affinity to CRF receptors 2-alpha and 2-beta. Post-translationally, glycosylated.

Its subcellular location is the secreted. Functionally, suppresses food intake, delays gastric emptying and decreases heat-induced edema. Might represent an endogenous ligand for maintaining homeostasis after stress. In Mus musculus (Mouse), this protein is Urocortin-2 (Ucn2).